A 50-amino-acid polypeptide reads, in one-letter code: Insulin (50 aa).

3 cysteine pairs are disulfide-bonded: Cys7/Cys36, Cys19/Cys49, and Cys35/Cys40.

It belongs to the insulin family. In terms of assembly, heterodimer of a B chain and an A chain linked by two disulfide bonds.

It localises to the secreted. In terms of biological role, insulin decreases blood glucose concentration. It increases cell permeability to monosaccharides, amino acids and fatty acids. It accelerates glycolysis, the pentose phosphate cycle, and glycogen synthesis in liver. In Proechimys guairae (Guaira spiny rat), this protein is Insulin (INS).